The chain runs to 710 residues: MSVPSSLSQSAINANSHGGPALSFPLPLHAAHNQLLNAKLQATAVVPKDLRSAMGEGSVPEPGPANAKWLKEGQNQLRRAATAHRDQNRNVTLTLAEEASQEAETAPLGPKGLMHLYSELELSAHNAANRGLHGSALIINTQEQGPDEGEEKAAGEAEEDDEDEEEEEEEEDLSSPPGLPEPLENVEVPSGPQALTDGPREHSKSASLLFGMRNSAASDEDSSWATLSQGSPSYGSPEDTDSFWNPNAFETDSDLPAGWMRVQDTSGTYYWHIPTGTTQWEPPGRASPSQGSSPQEESQLTWTGFAHQEGFEEGEFWKDEPSEEAPMELGLKDPEEATLSFPAQSLSPEPVPQEEEKLSQRNANPGIKCFAVRSLGWVEMTEEELAPGRSSVAVNNCIRQLSYHKNNLHDPMAGGWGEGKDLLLQLEDETLKLVEPQNQTLLHAQPIVSIRVWGVGRDSGSNRDFAYVARDKLTQMLKCHVFRCEAPAKNIATSLHEICSKIMSERRNARCLVNGLSLDHSKLVDVPFQVEFPAPKNELVQKFQVYYLGNVPVAKPVGVDVINGALESVLSSSSREQWTPSHVSVAPATLTILHQQTEAVLGECRVRFLSFLAVGRDVHTFAFIMAAGPASFCCHMFWCEPNAASLSEAVQAACMLRYQKCLDARSQTSTSCLPAPPAESVARRVGWTVRRGVQSLWGSLKPKRLGSQTP.

Position 135 is a phosphoserine (serine 135). Disordered regions lie at residues glutamate 143–proline 256 and glycine 276–leucine 300. Positions glycine 145–leucine 173 are enriched in acidic residues. An N6-acetyllysine modification is found at lysine 204. Residues serine 223–tyrosine 234 show a composition bias toward polar residues. Positions serine 253–arginine 285 constitute a WW domain. A compositionally biased stretch (low complexity) spans serine 287–glutamine 299. One can recognise a PID 1 domain in the interval phenylalanine 370–alanine 509. Serine 459 carries the phosphoserine; by PKC modification. A Phosphoserine modification is found at serine 517. A PID 2 domain is found at lysine 542 to serine 699. A Phosphotyrosine; by ABL1 modification is found at tyrosine 547. Serine 610 carries the phosphoserine; by SGK1 modification. At lysine 701 the chain carries N6-acetyllysine.

Component of a complex, at least composed of APBB1, RASD1/DEXRAS1 and APP. Interacts (via PID domain 2) with APP (with the intracellular domain of the amyloid-beta precursor protein). Interacts (via PID domain 2) with RASD1/DEXRAS1; impairs the transcription activation activity. Interacts (via PID domain 1) with KAT5/TIP60. Interacts (via the WW domain) with the proline-rich region of APBB1IP. Interacts with TSHZ1 and TSHZ2. Interacts (via the WW domain) with histone H2AX (when phosphorylated on 'Tyr-142') and the proline-rich region of ENAH. Interacts with MAPK8. Interacts (via PID domain 1) with TSHZ3 (via homeobox domain). Interacts with SET. Found in a trimeric complex with HDAC1 and TSHZ3; the interaction between HDAC1 and APBB1 is mediated by TSHZ3. Interacts (via WWW domain) with NEK6. Interacts (via WWW domain) with ABL1. Interacts with RNF157. Interacts with ARF6. Polyubiquitination by RNF157 leads to degradation by the proteasome. Post-translationally, phosphorylation at Ser-610 by SGK1 promotes its localization to the nucleus. Phosphorylated following nuclear translocation. Phosphorylation at Tyr-546 by ABL1 enhances transcriptional activation activity and reduces the affinity for RASD1/DEXRAS1. In terms of processing, acetylation at Lys-204 and Lys-701 by KAT5 promotes its transcription activator activity. Phosphorylated at Ser-459 by PKC upon insulin activation. In terms of tissue distribution, expressed in the brain, retinal lens and muscle cells (at protein level).

Its subcellular location is the cell membrane. It is found in the cytoplasm. It localises to the nucleus. The protein localises to the cell projection. The protein resides in the growth cone. Its subcellular location is the nucleus speckle. Transcription coregulator that can have both coactivator and corepressor functions. Adapter protein that forms a transcriptionally active complex with the gamma-secretase-derived amyloid precursor protein (APP) intracellular domain. Plays a central role in the response to DNA damage by translocating to the nucleus and inducing apoptosis. May act by specifically recognizing and binding histone H2AX phosphorylated on 'Tyr-142' (H2AXY142ph) at double-strand breaks (DSBs), recruiting other pro-apoptosis factors such as MAPK8/JNK1. Required for histone H4 acetylation at double-strand breaks (DSBs). Its ability to specifically bind modified histones and chromatin modifying enzymes such as KAT5/TIP60, probably explains its transcription activation activity. Functions in association with TSHZ3, SET and HDAC factors as a transcriptional repressor, that inhibits the expression of CASP4. Associates with chromatin in a region surrounding the CASP4 transcriptional start site(s). Involved in hippocampal neurite branching and neuromuscular junction formation, as a result plays a role in spatial memory functioning. Plays a role in the maintenance of lens transparency. May play a role in muscle cell strength. Acts as a molecular adapter that functions in neurite outgrowth by activating the RAC1-ARF6 axis upon insulin treatment. This Mus musculus (Mouse) protein is Amyloid beta precursor protein binding family B member 1.